We begin with the raw amino-acid sequence, 1459 residues long: PPE family protein PPE34 (1459 aa).

This sequence belongs to the mycobacterial PPE family. In terms of assembly, interacts with human TLR2.

It is found in the cell membrane. Its subcellular location is the secreted. The protein localises to the cell wall. The protein resides in the cell surface. Facilitates a shift in the ensuing immunity toward the Th2 phenotype and could aid in immune evasion by mycobacteria. Interacts with human Toll-like receptor 2 (TLR2) and triggers functional maturation of human dendritic cells (DCs), leading to secretion of IL-4, IL-5 and IL-10 from CD4(+) T cells and induction of Th2 immune response. Maturation of DCs involves PI3K, ERK1/2, p38 MAPK and NF-kappa-B signaling pathways. The protein is PPE family protein PPE34 of Mycobacterium tuberculosis (strain ATCC 25618 / H37Rv).